Reading from the N-terminus, the 395-residue chain is MKSKKKIVLAYSGGLDTSIILKWLQENYDAEVICYTADVGQEIDRKKIIKNAKRLGVKNIIIEDLKDTFVKDYVFPMIRGHAIYEGVYLLGTSIARPLIAKRQIAAAKKFGAYAVSHGSTGKGNDQVRFELGYHYFGPKVKIIAPWRIWKLNSRTDLIKYAKKNNIPIPTDKKGAPPFSIDDNLYHTSTEGKVLENPKNSAPEFLFQRTVSPEKAPNKASFVTIGFKNGDPITVNGKKLSPGNLLEKLNNVAGKNGIGRVDLVENRFIGIKSRGVYETPGGTLLMSAHRAIESITLDKETMHKKDEIMPKYAELIYNGYWYSKARFKLQKIVDLKKNKVNGSVKLKLYKGNITIMSRQTKSNAYSMKKVSFEENKTFNKSNVERFINFHKQKLRS.

ATP contacts are provided by residues 10 to 18 and alanine 37; that span reads AYSGGLDTS. L-citrulline-binding residues include tyrosine 88 and serine 93. Glycine 118 contributes to the ATP binding site. L-aspartate contacts are provided by threonine 120, asparagine 124, and aspartate 125. Asparagine 124 contacts L-citrulline. 5 residues coordinate L-citrulline: arginine 128, serine 179, serine 188, glutamate 264, and tyrosine 276.

Belongs to the argininosuccinate synthase family. Type 1 subfamily. Homotetramer.

The protein localises to the cytoplasm. The enzyme catalyses L-citrulline + L-aspartate + ATP = 2-(N(omega)-L-arginino)succinate + AMP + diphosphate + H(+). It participates in amino-acid biosynthesis; L-arginine biosynthesis; L-arginine from L-ornithine and carbamoyl phosphate: step 2/3. In Pelagibacter ubique (strain HTCC1062), this protein is Argininosuccinate synthase.